Consider the following 700-residue polypeptide: Elongation factor G (700 aa).

A tr-type G domain is found at 10 to 286; it reads NKVRNIGIMA…AVIDYLPNPL (277 aa). GTP is bound by residues 19–26, 83–87, and 137–140; these read AHIDAGKT, DTPGH, and NKMD.

Belongs to the TRAFAC class translation factor GTPase superfamily. Classic translation factor GTPase family. EF-G/EF-2 subfamily.

It localises to the cytoplasm. In terms of biological role, catalyzes the GTP-dependent ribosomal translocation step during translation elongation. During this step, the ribosome changes from the pre-translocational (PRE) to the post-translocational (POST) state as the newly formed A-site-bound peptidyl-tRNA and P-site-bound deacylated tRNA move to the P and E sites, respectively. Catalyzes the coordinated movement of the two tRNA molecules, the mRNA and conformational changes in the ribosome. This chain is Elongation factor G, found in Rhodococcus jostii (strain RHA1).